We begin with the raw amino-acid sequence, 300 residues long: MNTLVLKIDAVLSKHLKKQLASYTISSQNTYVAFAAKKNGVTVLLYKSGKLVLQGNGANALAQELNLPVAKTVFEASNNSQDIPIIGSDEVGNGSYFGGIAVVASFVDPKDHSFLKKLGVDDSKKLSDKTIQQIAPLLEKQIPHQSLLLSPKKYNELVGKSKPYNAISIKVALHNQAIFLLLQKGIQPKQIVIDAFTSQSNYEKHLKKEKNHFPNPLTFQEKAESHYLAVAVSSIIARNLFLDNLDQLGQDLGYQLPSGAGSASDKVASQLLAAYGMSSLEYSAKLHFANTHKAQALLTK.

The region spanning 83 to 300 is the RNase H type-2 domain; sequence IPIIGSDEVG…THKAQALLTK (218 aa). Aspartate 89, glutamate 90, and aspartate 194 together coordinate a divalent metal cation.

The protein belongs to the RNase HII family. RnhC subfamily. Requires Mn(2+) as cofactor. Mg(2+) serves as cofactor.

The protein resides in the cytoplasm. The enzyme catalyses Endonucleolytic cleavage to 5'-phosphomonoester.. Its function is as follows. Endonuclease that specifically degrades the RNA of RNA-DNA hybrids. The chain is Ribonuclease HIII from Streptococcus pyogenes serotype M49 (strain NZ131).